We begin with the raw amino-acid sequence, 836 residues long: MKDRIPFAVNNITCVILLSLFCNAASAVEFNTDVLDAADKKNIDFTRFSEAGYVLPGQYLLDVIVNGQSISPASLQISFVEPALSGDKAEKKLPQACLTSDMVRLMGLTAESLDKVVYWHDGQCADFHGLPGVDIRPDTGAGVLRINMPQAWLEYSDATWLPPSRWDDGIPGLMLDYNLNGTVSRNYQGGDSHQFSYNGTVGGNLGPWRLRADYQGSQEQSRYNGEKTTNRNFTWSRFYLFRAIPRWRANLTLGENNINSDIFRSWSYTGASLESDDRMLPPRLRGYAPQITGIAETNARVVVSQQGRVLYDSMVPAGPFSIQDLDSSVRGRLDVEVIEQNGRKKTFQVDTASVPYLTRPGQVRYKLVSGRSRGYGHETEGPVFATGEASWGLSNQWSLYGGAVLAGDYNALAAGAGWDLGVPGTLSADITQSVARIEGERTFQGKSWRLSYSKRFDNADADITFAGYRFSERNYMTMEQYLNARYRNDYSSREKEMYTVTLNKNVADWNTSFNLQYSRQTYWDIRKTDYYTVSVNRYFNVFGLQGVAVGLSASRSKYLGRDNDSAYLRISVPLGTGTASYSGSMSNDRYVNMAGYTDTFNDGLDSYSLNAGLNSGGGLTSQRQINAYYSHRSPLANLSANIASLQKGYTSFGVSASGGATITGKGAALHAGGMSGGTRLLVDTDGVGGVPVDGGQVVTNRWGTGVVTDISSYYRNTTSVDLKRLPDDVEATRSVVESALTEGAIGYRKFSVLKGKRLFAILRLADGSQPPFGASVTSEKGRELGMVADEGLAWLSGVTPGETLSVNWDGKIQCQVNVPETAISDQQLLLPCTPQK.

Residues 1-24 form the signal peptide; the sequence is MKDRIPFAVNNITCVILLSLFCNA. Residues Cys-814 and Cys-832 are joined by a disulfide bond.

It belongs to the fimbrial export usher family.

The protein localises to the cell outer membrane. In terms of biological role, involved in the export and assembly of pili subunits across the outer membrane. Forms a hexameric ring-shaped pore in the outer bacterial membrane. The 2 nanometer-diameter pore allows the passage of the thin tip fibrillum. As for the rod, it probably unwinds into linear fibers which would therefore be narrow enough to pass through the pore. In Escherichia coli, this protein is Outer membrane usher protein PapC (papC).